A 161-amino-acid chain; its full sequence is NADH-quinone oxidoreductase subunit I (161 aa).

2 4Fe-4S ferredoxin-type domains span residues 52–82 (LRRYPNGEERCIACKLCEAICPAMAITIESE) and 92–121 (SRYDIDLTKCIFCGFCEEACPVDAVVETRV). The [4Fe-4S] cluster site is built by Cys-62, Cys-65, Cys-68, Cys-72, Cys-101, Cys-104, Cys-107, and Cys-111.

The protein belongs to the complex I 23 kDa subunit family. NDH-1 is composed of 14 different subunits. Subunits NuoA, H, J, K, L, M, N constitute the membrane sector of the complex. It depends on [4Fe-4S] cluster as a cofactor.

The protein localises to the cell inner membrane. It carries out the reaction a quinone + NADH + 5 H(+)(in) = a quinol + NAD(+) + 4 H(+)(out). Its function is as follows. NDH-1 shuttles electrons from NADH, via FMN and iron-sulfur (Fe-S) centers, to quinones in the respiratory chain. The immediate electron acceptor for the enzyme in this species is believed to be ubiquinone. Couples the redox reaction to proton translocation (for every two electrons transferred, four hydrogen ions are translocated across the cytoplasmic membrane), and thus conserves the redox energy in a proton gradient. The sequence is that of NADH-quinone oxidoreductase subunit I from Azoarcus sp. (strain BH72).